The chain runs to 102 residues: MPGQKIRIKLKAYDHEVLDESAKKIVEVAKSTNAKISGPIPLPTERALYVVLRSPHKHKDSREQFEKRVHKRLIDIIEPSPKTIDALMKINLPAGVDVEIKL.

This sequence belongs to the universal ribosomal protein uS10 family. As to quaternary structure, part of the 30S ribosomal subunit.

Its function is as follows. Involved in the binding of tRNA to the ribosomes. This chain is Small ribosomal subunit protein uS10, found in Pseudothermotoga lettingae (strain ATCC BAA-301 / DSM 14385 / NBRC 107922 / TMO) (Thermotoga lettingae).